The chain runs to 270 residues: Glucosamine-6-phosphate deaminase (270 aa).

The active-site Proton acceptor; for enolization step is the D72. The For ring-opening step role is filled by D141. The active-site Proton acceptor; for ring-opening step is H143. The active-site For ring-opening step is E148.

Belongs to the glucosamine/galactosamine-6-phosphate isomerase family. NagB subfamily.

The enzyme catalyses alpha-D-glucosamine 6-phosphate + H2O = beta-D-fructose 6-phosphate + NH4(+). It functions in the pathway amino-sugar metabolism; N-acetylneuraminate degradation; D-fructose 6-phosphate from N-acetylneuraminate: step 5/5. With respect to regulation, allosterically activated by N-acetylglucosamine 6-phosphate (GlcNAc6P). Catalyzes the reversible isomerization-deamination of glucosamine 6-phosphate (GlcN6P) to form fructose 6-phosphate (Fru6P) and ammonium ion. The chain is Glucosamine-6-phosphate deaminase from Treponema denticola (strain ATCC 35405 / DSM 14222 / CIP 103919 / JCM 8153 / KCTC 15104).